Consider the following 91-residue polypeptide: PqqA binding protein (91 aa).

The protein belongs to the PqqD family. As to quaternary structure, monomer. Interacts with PqqE.

The protein operates within cofactor biosynthesis; pyrroloquinoline quinone biosynthesis. Functions as a PqqA binding protein and presents PqqA to PqqE, in the pyrroloquinoline quinone (PQQ) biosynthetic pathway. In Pseudomonas putida (strain W619), this protein is PqqA binding protein.